Here is a 79-residue protein sequence, read N- to C-terminus: Small ribosomal subunit protein bS18 (79 aa).

This sequence belongs to the bacterial ribosomal protein bS18 family. In terms of assembly, part of the 30S ribosomal subunit. Forms a tight heterodimer with protein bS6.

Binds as a heterodimer with protein bS6 to the central domain of the 16S rRNA, where it helps stabilize the platform of the 30S subunit. The protein is Small ribosomal subunit protein bS18 of Streptococcus pneumoniae (strain Hungary19A-6).